The chain runs to 437 residues: Serine carboxypeptidase-like 10 (437 aa).

An N-terminal signal peptide occupies residues 1 to 21 (MGSTLKHLLLLLLVLIRHVDS). Cystine bridges form between C80/C327, C243/C257, and C281/C293. A glycan (N-linked (GlcNAc...) asparagine) is linked at N101. S175 is a catalytic residue. N328 carries N-linked (GlcNAc...) asparagine glycosylation. D362 is an active-site residue. N378 is a glycosylation site (N-linked (GlcNAc...) asparagine). The active site involves H415. An N-linked (GlcNAc...) asparagine glycan is attached at N422.

Belongs to the peptidase S10 family. Expressed in senescent leaves.

Its subcellular location is the secreted. Its function is as follows. Involved in the biosynthesis of sinapoylated anthocyanins. This Arabidopsis thaliana (Mouse-ear cress) protein is Serine carboxypeptidase-like 10 (SCPL10).